Consider the following 161-residue polypeptide: Regulator of ribonuclease activity A (161 aa).

It belongs to the RraA family. Homotrimer. Binds to both RNA-binding sites in the C-terminal region of Rne and to RhlB.

It is found in the cytoplasm. Globally modulates RNA abundance by binding to RNase E (Rne) and regulating its endonucleolytic activity. Can modulate Rne action in a substrate-dependent manner by altering the composition of the degradosome. Modulates RNA-binding and helicase activities of the degradosome. This Shigella dysenteriae serotype 1 (strain Sd197) protein is Regulator of ribonuclease activity A.